The chain runs to 482 residues: Alanine aminotransferase 2 (482 aa).

Position 299 is an N6-(pyridoxal phosphate)lysine (lysine 299).

It belongs to the class-I pyridoxal-phosphate-dependent aminotransferase family. Alanine aminotransferase subfamily. Homodimer. Pyridoxal 5'-phosphate serves as cofactor.

It carries out the reaction L-alanine + 2-oxoglutarate = pyruvate + L-glutamate. The protein operates within photosynthesis; C4 acid pathway. It participates in amino-acid degradation; L-alanine degradation via transaminase pathway; pyruvate from L-alanine: step 1/1. Transfer of C3 units between the cytosol of mesophyll and bundle sheath cells to maintain a nitrogen-carbon balance in the C4-dicarboxylic pathway. The chain is Alanine aminotransferase 2 from Hordeum vulgare (Barley).